Consider the following 782-residue polypeptide: Zinc finger and SCAN domain-containing protein 10 (782 aa).

A disordered region spans residues 1–37; it reads MLAEPVPDALEQEHPGAVKLEEDEVGEEDPRLAESRP. Residues 1 to 71 form the SCAN box domain; the sequence is MLAEPVPDAL…GRLRELCNHW (71 aa). Basic and acidic residues-rich tracts occupy residues 11 to 20 and 28 to 37; these read EQEHPGAVKL and EDPRLAESRP. Phosphoserine occurs at positions 160 and 206. Disordered regions lie at residues 197-233 and 290-321; these read LAPSSNWPMSPEPQEILQDPRESNPSQGPSWLEENSR and SQTEKPEVAGEPLTQTVGQETSSTGWGGTPAD. C2H2-type zinc fingers lie at residues 292–315, 321–343, 349–371, 377–399, 421–443, 467–489, 495–517, 523–545, 551–573, 579–601, 607–629, 635–657, 669–691, and 697–719; these read TEKPEVAGEPLTQTVGQETSSTGW, DGSEVVKVRGASDAPEPQGEMQF, GVNFPEMSHLQAHQLQSHPNLQP, SFRCLWCGKTFGRSSILKLHMRT, LTKHLLTHSSEPAFRCAECNQGF, EGKTKVPEMAAVLCSHCGQTFKR, RHLRNHAKDKDHLSSEDPGSLSS, PYVCSDCGKAFRQSEQLMIHTRR, RPFSCQVCGRCFTQNSQLISHQQ, KPHACPQCSKRFVRRAGLARHLL, RPYHCAQCGKSFRQMRDLTRHVR, KPCRCNECGEGFTQNAHLARHQR, ICGHRFRNSSNLARHRRSHTGER, and TCGRSFRRNAHLQRHLITHTGSK. Over residues 302–313 the composition is skewed to polar residues; the sequence is LTQTVGQETSST. An N5-methylglutamine modification is found at Gln485. Positions 491–522 are disordered; it reads SSLKRHLRNHAKDKDHLSSEDPGSLSSSQESN. The span at 500-509 shows a compositional bias: basic and acidic residues; that stretch reads HAKDKDHLSS. Low complexity predominate over residues 510–521; the sequence is EDPGSLSSSQES.

As to quaternary structure, interacts with POU5F1/OCT4 and SOX2. Post-translationally, methylated at Gln-485 by N6AMT1. As to expression, embryonic stem (ES) cell-specific. Not expressed in adult, except in testis.

The protein resides in the nucleus. Embryonic stem (ES) cell-specific transcription factor required to maintain ES cell pluripotency. Can both activate and /or repress expression of target genes, depending on the context. Specifically binds the 5'-[GA]CGCNNGCG[CT]-3' DNA consensus sequence. Regulates expression of POU5F1/OCT4, ZSCAN4 and ALYREF/THOC4. The polypeptide is Zinc finger and SCAN domain-containing protein 10 (Zscan10) (Mus musculus (Mouse)).